Reading from the N-terminus, the 270-residue chain is Protein FAM110D (270 aa).

Low complexity predominate over residues 1 to 16 (MLLASPSTPSRGRTPS). Disordered regions lie at residues 1 to 83 (MLLA…RPDS), 117 to 142 (RDVASSSAGSSERPAAPGGWTAPQDA), and 186 to 244 (PQSW…QVSV). Residues 68 to 78 (RPARRGSGRRL) are compositionally biased toward basic residues.

Belongs to the FAM110 family.

The polypeptide is Protein FAM110D (FAM110D) (Bos taurus (Bovine)).